A 370-amino-acid chain; its full sequence is DNA primase large subunit PriL (370 aa).

Residues cysteine 268, cysteine 341, cysteine 350, and cysteine 354 each contribute to the [4Fe-4S] cluster site.

Belongs to the eukaryotic-type primase large subunit family. Heterodimer of a small subunit (PriS) and a large subunit (PriL). It depends on [4Fe-4S] cluster as a cofactor.

Regulatory subunit of DNA primase, an RNA polymerase that catalyzes the synthesis of short RNA molecules used as primers for DNA polymerase during DNA replication. Stabilizes and modulates the activity of the small subunit, increasing the rate of DNA synthesis, and conferring RNA synthesis capability. The DNA polymerase activity may enable DNA primase to also catalyze primer extension after primer synthesis. May also play a role in DNA repair. This is DNA primase large subunit PriL from Archaeoglobus fulgidus (strain ATCC 49558 / DSM 4304 / JCM 9628 / NBRC 100126 / VC-16).